The chain runs to 108 residues: UPF0102 protein WS0451 (108 aa).

Belongs to the UPF0102 family.

The chain is UPF0102 protein WS0451 from Wolinella succinogenes (strain ATCC 29543 / DSM 1740 / CCUG 13145 / JCM 31913 / LMG 7466 / NCTC 11488 / FDC 602W) (Vibrio succinogenes).